The primary structure comprises 290 residues: ATP synthase gamma chain (290 aa).

It belongs to the ATPase gamma chain family. In terms of assembly, F-type ATPases have 2 components, CF(1) - the catalytic core - and CF(0) - the membrane proton channel. CF(1) has five subunits: alpha(3), beta(3), gamma(1), delta(1), epsilon(1). CF(0) has three main subunits: a, b and c.

The protein localises to the cell inner membrane. Produces ATP from ADP in the presence of a proton gradient across the membrane. The gamma chain is believed to be important in regulating ATPase activity and the flow of protons through the CF(0) complex. This is ATP synthase gamma chain from Chlorobium luteolum (strain DSM 273 / BCRC 81028 / 2530) (Pelodictyon luteolum).